The chain runs to 784 residues: Ribosome biogenesis protein BOP1 homolog (784 aa).

Basic residues predominate over residues 1–11 (MTKKLALKRKG). The segment at 1 to 159 (MTKKLALKRK…DSDTSDEEDI (159 aa)) is disordered. Acidic residues-rich tracts occupy residues 27 to 36 (SENEEEEEDL), 45 to 54 (EDSTDDEGID), 62 to 73 (SEELQFESDEEG), and 84 to 111 (AEEDEESSDEDDDGEEESSDEEEVEDEE). The segment covering 112 to 123 (KDSKLKQSDDKP) has biased composition (basic and acidic residues). Positions 124–133 (SSSGAASKKA) are enriched in low complexity. A compositionally biased stretch (basic and acidic residues) spans 138 to 148 (LSKRDTSKPEY). Over residues 149–158 (QDSDTSDEED) the composition is skewed to acidic residues. 7 WD repeats span residues 445-486 (GHTD…RTIE), 488-526 (DEVVRCVAWCPNPKLSIIAVATGNRLLLVNPKVGDKVLV), 570-612 (THFK…SQIP), 615-653 (KSKGLIQFVLFHPVKPCFFVATQHNIRIYDLVKQELVKK), 656-695 (TNSKWISGMSIHPKGDNLLVSTYDKKMLWFDLDLSTKPYQ), 699-738 (LHRNAVRSVAFHLRYPLFASGSDDQAVIVSHGMVYNDLLQ), and 754-784 (RDEFGVLDVNWHPVQPWVFSTGADSTIRLYT).

It belongs to the WD repeat BOP1/ERB1 family.

Its subcellular location is the nucleus. It localises to the nucleolus. The protein resides in the nucleoplasm. In terms of biological role, required for maturation of ribosomal RNAs and formation of the large ribosomal subunit. The sequence is that of Ribosome biogenesis protein BOP1 homolog from Drosophila erecta (Fruit fly).